Consider the following 316-residue polypeptide: 1-phosphofructokinase (316 aa).

ATP-binding positions include 225–230 (SMGAGG) and 256–257 (GD). D257 serves as the catalytic Proton acceptor.

The protein belongs to the carbohydrate kinase PfkB family.

It catalyses the reaction beta-D-fructose 1-phosphate + ATP = beta-D-fructose 1,6-bisphosphate + ADP + H(+). In terms of biological role, catalyzes the ATP-dependent phosphorylation of fructose-l-phosphate to fructose-l,6-bisphosphate. This Rhodobacter capsulatus (Rhodopseudomonas capsulata) protein is 1-phosphofructokinase.